A 255-amino-acid polypeptide reads, in one-letter code: Electron transfer flavoprotein beta subunit lysine methyltransferase (255 aa).

The transit peptide at 1–32 directs the protein to the mitochondrion; sequence MAFSLCWKAPRSQWSFLQALNSGFPLFPWRTV.

Belongs to the methyltransferase superfamily. ETFBKMT family. In terms of assembly, interacts with HSPD1; this protein may possibly be a methylation substrate.

The protein resides in the cytoplasm. It is found in the mitochondrion matrix. It catalyses the reaction L-lysyl-[protein] + 3 S-adenosyl-L-methionine = N(6),N(6),N(6)-trimethyl-L-lysyl-[protein] + 3 S-adenosyl-L-homocysteine + 3 H(+). Functionally, protein-lysine methyltransferase that selectively trimethylates the flavoprotein ETFB in mitochondria. Thereby, may negatively regulate the function of ETFB in electron transfer from Acyl-CoA dehydrogenases to the main respiratory chain. The polypeptide is Electron transfer flavoprotein beta subunit lysine methyltransferase (Rattus norvegicus (Rat)).